The primary structure comprises 642 residues: Chaperone protein DnaK (642 aa).

Thr-198 carries the phosphothreonine; by autocatalysis modification. The segment at 602–642 (AYAKMTEKQQSDDGAGTQNADHKEDDVVDADFEEVKSDKKD) is disordered.

It belongs to the heat shock protein 70 family.

In terms of biological role, acts as a chaperone. This Dichelobacter nodosus (strain VCS1703A) protein is Chaperone protein DnaK.